The following is a 298-amino-acid chain: N-acetylmuramic acid 6-phosphate etherase (298 aa).

The SIS domain occupies 55 to 218 (IHAQVSGGGR…STGLMIKSGK (164 aa)). Glu-83 serves as the catalytic Proton donor. Glu-114 is an active-site residue.

Belongs to the GCKR-like family. MurNAc-6-P etherase subfamily. In terms of assembly, homodimer.

It carries out the reaction N-acetyl-D-muramate 6-phosphate + H2O = N-acetyl-D-glucosamine 6-phosphate + (R)-lactate. It participates in amino-sugar metabolism; 1,6-anhydro-N-acetylmuramate degradation. It functions in the pathway amino-sugar metabolism; N-acetylmuramate degradation. The protein operates within cell wall biogenesis; peptidoglycan recycling. In terms of biological role, specifically catalyzes the cleavage of the D-lactyl ether substituent of MurNAc 6-phosphate, producing GlcNAc 6-phosphate and D-lactate. Together with AnmK, is also required for the utilization of anhydro-N-acetylmuramic acid (anhMurNAc) either imported from the medium or derived from its own cell wall murein, and thus plays a role in cell wall recycling. This chain is N-acetylmuramic acid 6-phosphate etherase, found in Shigella flexneri serotype 5b (strain 8401).